Consider the following 1071-residue polypeptide: Carbamoyl phosphate synthase large chain (1071 aa).

Residues 1-403 (MPKRTDLKSI…SFQKALRGLE (403 aa)) form a carboxyphosphate synthetic domain region. The ATP site is built by Arg129, Arg169, Gly175, Gly176, Gln208, Val210, Glu215, Gly241, Val242, His243, Gln285, and Glu299. An ATP-grasp 1 domain is found at 133 to 328 (KEAMEKIGLS…IAKVAAKLAV (196 aa)). Residues Gln285, Glu299, and Asn301 each contribute to the Mg(2+) site. Mn(2+)-binding residues include Gln285, Glu299, and Asn301. The interval 404-548 (TGLCGFNPRS…YSTYEEECES (145 aa)) is oligomerization domain. A carbamoyl phosphate synthetic domain region spans residues 549 to 930 (RPSDRKKVMI…AYYKAQLGAG (382 aa)). An ATP-grasp 2 domain is found at 673–864 (QKVLNDLGLR…LAKVGARCMA (192 aa)). 10 residues coordinate ATP: Arg709, Phe748, Leu750, Glu755, Gly780, Ile781, His782, Ser783, Gln823, and Glu835. Mg(2+) contacts are provided by Gln823, Glu835, and Asn837. Residues Gln823, Glu835, and Asn837 each coordinate Mn(2+). The 141-residue stretch at 931–1071 (ERLNPTGKIF…ELHGRLKNRN (141 aa)) folds into the MGS-like domain. Positions 931 to 1071 (ERLNPTGKIF…ELHGRLKNRN (141 aa)) are allosteric domain.

Belongs to the CarB family. Composed of two chains; the small (or glutamine) chain promotes the hydrolysis of glutamine to ammonia, which is used by the large (or ammonia) chain to synthesize carbamoyl phosphate. Tetramer of heterodimers (alpha,beta)4. It depends on Mg(2+) as a cofactor. Mn(2+) serves as cofactor.

It catalyses the reaction hydrogencarbonate + L-glutamine + 2 ATP + H2O = carbamoyl phosphate + L-glutamate + 2 ADP + phosphate + 2 H(+). The enzyme catalyses hydrogencarbonate + NH4(+) + 2 ATP = carbamoyl phosphate + 2 ADP + phosphate + 2 H(+). Its pathway is amino-acid biosynthesis; L-arginine biosynthesis; carbamoyl phosphate from bicarbonate: step 1/1. It participates in pyrimidine metabolism; UMP biosynthesis via de novo pathway; (S)-dihydroorotate from bicarbonate: step 1/3. In terms of biological role, large subunit of the glutamine-dependent carbamoyl phosphate synthetase (CPSase). CPSase catalyzes the formation of carbamoyl phosphate from the ammonia moiety of glutamine, carbonate, and phosphate donated by ATP, constituting the first step of 2 biosynthetic pathways, one leading to arginine and/or urea and the other to pyrimidine nucleotides. The large subunit (synthetase) binds the substrates ammonia (free or transferred from glutamine from the small subunit), hydrogencarbonate and ATP and carries out an ATP-coupled ligase reaction, activating hydrogencarbonate by forming carboxy phosphate which reacts with ammonia to form carbamoyl phosphate. The sequence is that of Carbamoyl phosphate synthase large chain from Neisseria meningitidis serogroup B (strain ATCC BAA-335 / MC58).